An 85-amino-acid chain; its full sequence is Large ribosomal subunit protein bL27 (85 aa).

Positions 1-22 (MAHKKGQGSSRNGRDSPGQRRG) are disordered.

This sequence belongs to the bacterial ribosomal protein bL27 family.

This is Large ribosomal subunit protein bL27 from Anaeromyxobacter dehalogenans (strain 2CP-1 / ATCC BAA-258).